Here is a 51-residue protein sequence, read N- to C-terminus: Large ribosomal subunit protein bL33 (51 aa).

The protein belongs to the bacterial ribosomal protein bL33 family.

The chain is Large ribosomal subunit protein bL33 from Colwellia psychrerythraea (strain 34H / ATCC BAA-681) (Vibrio psychroerythus).